Here is a 573-residue protein sequence, read N- to C-terminus: O-fucosyltransferase 20 (573 aa).

Over 1 to 60 the chain is Cytoplasmic; that stretch reads MALSKNSNSNSFNKKKVSYISVPSQIINSLSSSSLQSLLVSPKKSSRSTNRFSFSYRNPR. A helical; Signal-anchor for type II membrane protein transmembrane segment spans residues 61–81; it reads IWFFTLFLVSLFGMLKLGFNV. Residues 82-573 are Lumenal-facing; that stretch reads DPISLPFSRY…RQQQEQQSDA (492 aa). Asparagine 138 is a glycosylation site (N-linked (GlcNAc...) asparagine). 344–346 provides a ligand contact to substrate; the sequence is HLR. Asparagine 385 and asparagine 517 each carry an N-linked (GlcNAc...) asparagine glycan. Residues 547–556 show a composition bias toward basic and acidic residues; that stretch reads AGKDVTKHPV. The tract at residues 547 to 573 is disordered; the sequence is AGKDVTKHPVPECMCSDRQQQEQQSDA. The segment covering 563–573 has biased composition (polar residues); it reads DRQQQEQQSDA.

Belongs to the glycosyltransferase GT106 family. Interacts with RACK1A. In terms of tissue distribution, highly expressed in shoot apical meristem (SAM) and in young vegetative tissues.

Its subcellular location is the golgi apparatus membrane. It participates in glycan metabolism. May play a role in the biosynthesis of matrix polysaccharides and contribute to the biomechanics and development of the plant cell wall. In Arabidopsis thaliana (Mouse-ear cress), this protein is O-fucosyltransferase 20.